A 248-amino-acid chain; its full sequence is 5'-nucleotidase SurE (248 aa).

4 residues coordinate a divalent metal cation: Asp8, Asp9, Ser39, and Asn91.

Belongs to the SurE nucleotidase family. Requires a divalent metal cation as cofactor.

Its subcellular location is the cytoplasm. The catalysed reaction is a ribonucleoside 5'-phosphate + H2O = a ribonucleoside + phosphate. Nucleotidase that shows phosphatase activity on nucleoside 5'-monophosphates. This is 5'-nucleotidase SurE from Shewanella amazonensis (strain ATCC BAA-1098 / SB2B).